Here is a 139-residue protein sequence, read N- to C-terminus: Large ribosomal subunit protein uL16 (139 aa).

Residues 1–20 are compositionally biased toward basic residues; sequence MLIPKRTKYRKQHRPVRRGM. Positions 1–21 are disordered; that stretch reads MLIPKRTKYRKQHRPVRRGMS.

The protein belongs to the universal ribosomal protein uL16 family. Part of the 50S ribosomal subunit.

Functionally, binds 23S rRNA and is also seen to make contacts with the A and possibly P site tRNAs. The sequence is that of Large ribosomal subunit protein uL16 from Bifidobacterium adolescentis (strain ATCC 15703 / DSM 20083 / NCTC 11814 / E194a).